Consider the following 518-residue polypeptide: Ankyrin repeat and SOCS box protein 3 (518 aa).

ANK repeat units lie at residues aspartate 9–valine 38, arginine 42–tyrosine 71, glutamate 78–alanine 107, glutamate 111–glycine 140, cysteine 145–cysteine 174, phenylalanine 178–cysteine 207, aspartate 211–leucine 240, serine 246–aspartate 275, asparagine 279–alanine 308, glycine 315–glutamate 346, and histidine 348–proline 373. Positions methionine 441–leucine 504 constitute an SOCS box domain.

It belongs to the ankyrin SOCS box (ASB) family. Interacts with ELOB and TNFRSF1B.

The protein resides in the cytoplasm. It participates in protein modification; protein ubiquitination. Probable substrate-recognition component of a SCF-like ECS (Elongin-Cullin-SOCS-box protein) E3 ubiquitin-protein ligase complex which mediates the ubiquitination and subsequent proteasomal degradation of target proteins. Recognizes TNFRSF1B. Plays a role in the down-regulation of antiviral innate immunity by targeting MAVS for ubiquitin-proteasomal degradation. Also destabilizes TRAF6 by enhancing its 'Lys-48'-linked polyubiquitination. In Homo sapiens (Human), this protein is Ankyrin repeat and SOCS box protein 3 (ASB3).